We begin with the raw amino-acid sequence, 454 residues long: Growth/differentiation factor 6 (454 aa).

An N-terminal signal peptide occupies residues Met-1–Gly-22. A propeptide spanning residues Phe-23–Arg-334 is cleaved from the precursor. Residues Ile-28–Leu-93 form a disordered region. 2 stretches are compositionally biased toward basic and acidic residues: residues Asp-39 to Met-52 and Ala-60 to Lys-73. Over residues Gly-81–Gly-92 the composition is skewed to low complexity. Asn-117 carries an N-linked (GlcNAc...) asparagine glycan. Disordered stretches follow at residues Asp-247–Phe-268 and Ala-303–Arg-350. Residues Ala-303–Pro-319 show a composition bias toward low complexity. Positions Gly-329–Arg-350 are enriched in basic residues. Cystine bridges form between Cys-353-Cys-419, Cys-382-Cys-451, and Cys-386-Cys-453.

The protein belongs to the TGF-beta family. In terms of assembly, homodimer; disulfide-linked. In terms of tissue distribution, expressed in different subsets of developing joints. Highly expressed in the cochlea.

The protein localises to the secreted. Functionally, growth factor that controls proliferation and cellular differentiation in the retina and bone formation. Plays a key role in regulating apoptosis during retinal development. Establishes dorsal-ventral positional information in the retina and controls the formation of the retinotectal map. Required for normal formation of bones and joints in the limbs, skull, digits and axial skeleton. Plays a key role in establishing boundaries between skeletal elements during development. Regulation of GDF6 expression seems to be a mechanism for evolving species-specific changes in skeletal structures. Seems to positively regulate differentiation of chondrogenic tissue through the growth factor receptors subunits BMPR1A, BMPR1B, BMPR2 and ACVR2A, leading to the activation of SMAD1-SMAD5-SMAD8 complex. The regulation of chondrogenic differentiation is inhibited by NOG. Also involved in the induction of adipogenesis from mesenchymal stem cells. This mechanism acts through the growth factor receptors subunits BMPR1A, BMPR2 and ACVR2A and the activation of SMAD1-SMAD5-SMAD8 complex and MAPK14/p38. In Mus musculus (Mouse), this protein is Growth/differentiation factor 6 (Gdf6).